A 251-amino-acid chain; its full sequence is Tungstate/molybdate/chromate-binding protein ModA (251 aa).

The N-terminal stretch at 1-23 (MTTRLPQLLLALLASAVSLAASA) is a signal peptide. 2 residues coordinate molybdate: threonine 60 and isoleucine 168.

It belongs to the bacterial solute-binding protein ModA family. As to quaternary structure, the complex is composed of two ATP-binding proteins (ModC), two transmembrane proteins (ModB) and a solute-binding protein (ModA).

Its subcellular location is the periplasm. In terms of biological role, part of the ABC transporter complex ModABC involved in the transport of molybdenum into the cell. Binds tungstate and molybdate. Can also bind chromate, with lower affinity. Plays an essential role in recruitment of molybdate for nitrate reduction. The protein is Tungstate/molybdate/chromate-binding protein ModA of Pseudomonas aeruginosa (strain ATCC 15692 / DSM 22644 / CIP 104116 / JCM 14847 / LMG 12228 / 1C / PRS 101 / PAO1).